The following is a 160-amino-acid chain: Cytochrome b6-f complex subunit 4 (160 aa).

The next 3 helical transmembrane spans lie at 36-56 (LLYI…GLAV), 95-115 (LLGV…PFLE), and 131-151 (TVFL…TLPI).

Belongs to the cytochrome b family. PetD subfamily. As to quaternary structure, the 4 large subunits of the cytochrome b6-f complex are cytochrome b6, subunit IV (17 kDa polypeptide, petD), cytochrome f and the Rieske protein, while the 4 small subunits are petG, petL, petM and petN. The complex functions as a dimer.

The protein resides in the plastid. Its subcellular location is the chloroplast thylakoid membrane. Its function is as follows. Component of the cytochrome b6-f complex, which mediates electron transfer between photosystem II (PSII) and photosystem I (PSI), cyclic electron flow around PSI, and state transitions. This Gossypium barbadense (Sea Island cotton) protein is Cytochrome b6-f complex subunit 4.